A 451-amino-acid chain; its full sequence is tRNA-2-methylthio-N(6)-dimethylallyladenosine synthase (451 aa).

The MTTase N-terminal domain maps to 11–127 (RHYHITTFGC…LEDLLQQVFD (117 aa)). Residues cysteine 20, cysteine 56, cysteine 90, cysteine 162, cysteine 166, and cysteine 169 each contribute to the [4Fe-4S] cluster site. Residues 148-385 (RDSTITAWVN…NHLVAQKAAE (238 aa)) enclose the Radical SAM core domain. The 64-residue stretch at 388–451 (QRYLGRIEEV…RAFSLTGEIV (64 aa)) folds into the TRAM domain.

Belongs to the methylthiotransferase family. MiaB subfamily. Monomer. [4Fe-4S] cluster serves as cofactor.

It localises to the cytoplasm. The catalysed reaction is N(6)-dimethylallyladenosine(37) in tRNA + (sulfur carrier)-SH + AH2 + 2 S-adenosyl-L-methionine = 2-methylsulfanyl-N(6)-dimethylallyladenosine(37) in tRNA + (sulfur carrier)-H + 5'-deoxyadenosine + L-methionine + A + S-adenosyl-L-homocysteine + 2 H(+). Functionally, catalyzes the methylthiolation of N6-(dimethylallyl)adenosine (i(6)A), leading to the formation of 2-methylthio-N6-(dimethylallyl)adenosine (ms(2)i(6)A) at position 37 in tRNAs that read codons beginning with uridine. This Rippkaea orientalis (strain PCC 8801 / RF-1) (Cyanothece sp. (strain PCC 8801)) protein is tRNA-2-methylthio-N(6)-dimethylallyladenosine synthase.